The chain runs to 125 residues: MKPNYNVDRAPKRSDEPVWWSLFGAGGTWFAMITPVTVLVLGILVPMGVINAEALSYDRVVSFATSIIGALFIIATLALPMWHAMHRVHHGMHDLKFHTGVVGKIACYAIAGLISALAVVFIFML.

The next 3 helical transmembrane spans lie at 30–50 (FAMITPVTVLVLGILVPMGVI), 60–80 (VVSFATSIIGALFIIATLALP), and 105–125 (IACYAIAGLISALAVVFIFML).

Belongs to the FrdD family. As to quaternary structure, part of an enzyme complex containing four subunits: a flavoprotein (FrdA), an iron-sulfur protein (FrdB), and two hydrophobic anchor proteins (FrdC and FrdD).

It is found in the cell inner membrane. Its function is as follows. Anchors the catalytic components of the fumarate reductase complex to the cell membrane, binds quinones. The chain is Fumarate reductase subunit D from Vibrio vulnificus (strain YJ016).